A 276-amino-acid polypeptide reads, in one-letter code: SF-assemblin (276 aa).

The segment at methionine 1–glycine 31 is nonhelical region. Positions methionine 1–glutamate 37 are disordered. The rod stretch occupies residues proline 32–alanine 276. The stretch at leucine 67 to arginine 145 forms a coiled coil.

This sequence belongs to the SF-assemblin family.

The protein resides in the cytoplasm. Its subcellular location is the cytoskeleton. Its function is as follows. Major component of the striated microtubule-associated fibers (SMAFs; system-I-fibers). The sequence is that of SF-assemblin from Chlamydomonas reinhardtii (Chlamydomonas smithii).